The following is a 145-amino-acid chain: Acidic phospholipase A2 (145 aa).

Positions 1 to 21 are cleaved as a signal peptide; that stretch reads MYPAHLLVLLAVCVSLLGAAS. A propeptide spanning residues 22-27 is cleaved from the precursor; sequence IPPLPL. Intrachain disulfides connect Cys38-Cys98, Cys54-Cys144, Cys56-Cys72, Cys71-Cys125, Cys78-Cys118, Cys87-Cys111, and Cys105-Cys116. 2 residues coordinate Ca(2+): Tyr55 and Gly57. His75 is a catalytic residue. Residue Asp76 participates in Ca(2+) binding. Asp119 is an active-site residue.

The protein belongs to the phospholipase A2 family. Group I subfamily. D49 sub-subfamily. Ca(2+) is required as a cofactor. In terms of tissue distribution, expressed by the venom gland.

The protein localises to the secreted. It carries out the reaction a 1,2-diacyl-sn-glycero-3-phosphocholine + H2O = a 1-acyl-sn-glycero-3-phosphocholine + a fatty acid + H(+). Functionally, PLA2 catalyzes the calcium-dependent hydrolysis of the 2-acyl groups in 3-sn-phosphoglycerides. The sequence is that of Acidic phospholipase A2 from Notechis scutatus scutatus (Mainland tiger snake).